The chain runs to 630 residues: ATP-dependent zinc metalloprotease FtsH 2 (630 aa).

Residues Met-1–Arg-8 are Cytoplasmic-facing. The helical transmembrane segment at Gly-9–Ile-29 threads the bilayer. Topologically, residues Ser-30–Trp-110 are periplasmic. The chain crosses the membrane as a helical span at residues Val-111–Phe-131. Over Arg-132–Ala-630 the chain is Cytoplasmic. Gly-203–Thr-210 contributes to the ATP binding site. Residue His-425 coordinates Zn(2+). Residue Glu-426 is part of the active site. Residues His-429 and Asp-502 each coordinate Zn(2+).

The protein in the central section; belongs to the AAA ATPase family. In the C-terminal section; belongs to the peptidase M41 family. As to quaternary structure, homohexamer. It depends on Zn(2+) as a cofactor.

The protein resides in the cell inner membrane. Acts as a processive, ATP-dependent zinc metallopeptidase for both cytoplasmic and membrane proteins. Plays a role in the quality control of integral membrane proteins. In Petrotoga mobilis (strain DSM 10674 / SJ95), this protein is ATP-dependent zinc metalloprotease FtsH 2.